Consider the following 141-residue polypeptide: Nucleoside triphosphatase NudI (141 aa).

The 141-residue stretch at 1–141 (MRQRTIVCPL…RHTLALKGLL (141 aa)) folds into the Nudix hydrolase domain. Positions 38 to 59 (GGVEPGERIEEALRREIREELG) match the Nudix box motif.

The protein belongs to the Nudix hydrolase family. NudI subfamily. As to quaternary structure, monomer. Mg(2+) is required as a cofactor.

The enzyme catalyses a ribonucleoside 5'-triphosphate + H2O = a ribonucleoside 5'-phosphate + diphosphate + H(+). It catalyses the reaction a 2'-deoxyribonucleoside 5'-triphosphate + H2O = a 2'-deoxyribonucleoside 5'-phosphate + diphosphate + H(+). The catalysed reaction is dUTP + H2O = dUMP + diphosphate + H(+). It carries out the reaction dTTP + H2O = dTMP + diphosphate + H(+). The enzyme catalyses dCTP + H2O = dCMP + diphosphate + H(+). Functionally, catalyzes the hydrolysis of nucleoside triphosphates, with a preference for pyrimidine deoxynucleoside triphosphates (dUTP, dTTP and dCTP). The sequence is that of Nucleoside triphosphatase NudI from Salmonella paratyphi B (strain ATCC BAA-1250 / SPB7).